The following is a 231-amino-acid chain: 2-C-methyl-D-erythritol 4-phosphate cytidylyltransferase (231 aa).

This sequence belongs to the IspD/TarI cytidylyltransferase family. IspD subfamily.

The catalysed reaction is 2-C-methyl-D-erythritol 4-phosphate + CTP + H(+) = 4-CDP-2-C-methyl-D-erythritol + diphosphate. Its pathway is isoprenoid biosynthesis; isopentenyl diphosphate biosynthesis via DXP pathway; isopentenyl diphosphate from 1-deoxy-D-xylulose 5-phosphate: step 2/6. In terms of biological role, catalyzes the formation of 4-diphosphocytidyl-2-C-methyl-D-erythritol from CTP and 2-C-methyl-D-erythritol 4-phosphate (MEP). In Fusobacterium nucleatum subsp. nucleatum (strain ATCC 25586 / DSM 15643 / BCRC 10681 / CIP 101130 / JCM 8532 / KCTC 2640 / LMG 13131 / VPI 4355), this protein is 2-C-methyl-D-erythritol 4-phosphate cytidylyltransferase.